We begin with the raw amino-acid sequence, 230 residues long: Flagellar L-ring protein (230 aa).

An N-terminal signal peptide occupies residues 1-15 (MSRLPSLSRLCLAIA). Residue Cys-16 is the site of N-palmitoyl cysteine attachment. The S-diacylglycerol cysteine moiety is linked to residue Cys-16.

This sequence belongs to the FlgH family. As to quaternary structure, the basal body constitutes a major portion of the flagellar organelle and consists of four rings (L,P,S, and M) mounted on a central rod.

The protein resides in the cell outer membrane. Its subcellular location is the bacterial flagellum basal body. In terms of biological role, assembles around the rod to form the L-ring and probably protects the motor/basal body from shearing forces during rotation. In Xanthomonas euvesicatoria pv. vesicatoria (strain 85-10) (Xanthomonas campestris pv. vesicatoria), this protein is Flagellar L-ring protein.